We begin with the raw amino-acid sequence, 343 residues long: 4-hydroxy-2-oxovalerate aldolase 4 (343 aa).

Positions 8–260 constitute a Pyruvate carboxyltransferase domain; the sequence is VTVHDMTLRD…ETGVDVAKIT (253 aa). Position 16 to 17 (16 to 17) interacts with substrate; the sequence is RD. Residue D17 participates in Mn(2+) binding. H20 functions as the Proton acceptor in the catalytic mechanism. 2 residues coordinate substrate: S170 and H199. Positions 199 and 201 each coordinate Mn(2+). Position 290 (Y290) interacts with substrate.

Belongs to the 4-hydroxy-2-oxovalerate aldolase family.

The enzyme catalyses (S)-4-hydroxy-2-oxopentanoate = acetaldehyde + pyruvate. This chain is 4-hydroxy-2-oxovalerate aldolase 4, found in Dechloromonas aromatica (strain RCB).